The primary structure comprises 377 residues: Nucleosome assembly protein 1;3 (377 aa).

A coiled-coil region spans residues 26–80; sequence VNVLKNKLQGLTGKHSNVLENLSPNVRKRVEVLREIQTQHDELEAKFFEERAALE. Residues 47–62 carry the Nuclear export signal motif; that stretch reads LSPNVRKRVEVLREIQ. The short motif at 223-228 is the Nuclear localization signal element; the sequence is KKKPKK. Positions 298-377 are disordered; the sequence is EAAQDEDYID…GERPPECKQQ (80 aa). Positions 300-341 are enriched in acidic residues; sequence AQDEDYIDLEDDEDEEDDEDEDEDEEDEEEEDEDEDDDDEDE. A compositionally biased stretch (basic residues) spans 345–357; sequence KTKKKSSAGRKRS. A Cysteine methyl ester modification is found at Cys374. Cys374 carries S-farnesyl cysteine lipidation. A propeptide spans 375-377 (removed in mature form); it reads KQQ.

This sequence belongs to the nucleosome assembly protein (NAP) family. As to quaternary structure, can form homomeric and heteromeric protein complexes with NAP1;4. Binds histones H2A and H2B in vivo. Also able to bind histones H1 and H4 in vitro. Interacts with CYCB1;1 and with alpha tubulin.

The protein localises to the nucleus. Its subcellular location is the cytoplasm. May modulate chromatin structure by regulation of nucleosome assembly/disassembly. Could function together with B-type cyclins in the regulation of microtubule dynamics. This is Nucleosome assembly protein 1;3 (NAP1;3) from Nicotiana tabacum (Common tobacco).